Reading from the N-terminus, the 88-residue chain is uncharacterized protein (88 aa).

This is an uncharacterized protein from Acidianus convivator (ABV).